A 512-amino-acid polypeptide reads, in one-letter code: Gamma-aminobutyric acid receptor subunit beta-2 (512 aa).

The N-terminal stretch at 1–25 (MWRVRKRGYFGIWSFPLIIAAVCAQ) is a signal peptide. The Extracellular segment spans residues 26-244 (SVNDPSNMSL…SFKLKRNIGY (219 aa)). Asparagine 32 and asparagine 104 each carry an N-linked (GlcNAc...) asparagine glycan. Residue tyrosine 121 participates in histamine binding. Residues cysteine 160 and cysteine 174 are joined by a disulfide bond. Asparagine 173 carries an N-linked (GlcNAc...) asparagine glycan. Histamine contacts are provided by residues 180-181 (SY) and threonine 226. 2 residues coordinate 4-aminobutanoate: tyrosine 181 and threonine 226. 3 consecutive transmembrane segments (helical) span residues 245–266 (FILQ…SFWI), 270–292 (ASAA…NTHL), and 304–326 (AIDM…YALV). The Cytoplasmic segment spans residues 327-489 (NYIFFGRGPQ…DLTDVNAIDR (163 aa)). The residue at position 441 (tyrosine 441) is a Phosphotyrosine. A helical transmembrane segment spans residues 490–511 (WSRIFFPVVFSFFNIVYWLYYV).

The protein belongs to the ligand-gated ion channel (TC 1.A.9) family. Gamma-aminobutyric acid receptor (TC 1.A.9.5) subfamily. GABRB2 sub-subfamily. Heteropentamer, formed by a combination of alpha (GABRA1-6), beta (GABRB1-3), gamma (GABRG1-3), delta (GABRD), epsilon (GABRE), rho (GABRR1-3), pi (GABRP) and theta (GABRQ) chains, each subunit exhibiting distinct physiological and pharmacological properties. Interacts with UBQLN1. May interact with KIF21B. Identified in a complex of 720 kDa composed of LHFPL4, NLGN2, GABRA1, GABRB2, GABRG2 and GABRB3. In terms of processing, glycosylated.

The protein localises to the postsynaptic cell membrane. It is found in the cell membrane. It localises to the cytoplasmic vesicle. The catalysed reaction is chloride(in) = chloride(out). Its activity is regulated as follows. Allosterically activated by benzodiazepines and the anesthetic etomidate. Inhibited by the antagonist bicuculline. Potentiated by histamine. Its function is as follows. Beta subunit of the heteropentameric ligand-gated chloride channel gated by gamma-aminobutyric acid (GABA), a major inhibitory neurotransmitter in the brain. GABA-gated chloride channels, also named GABA(A) receptors (GABAAR), consist of five subunits arranged around a central pore and contain GABA active binding site(s) located at the alpha and beta subunit interface(s). When activated by GABA, GABAARs selectively allow the flow of chloride anions across the cell membrane down their electrochemical gradient. Chloride influx into the postsynaptic neuron following GABAAR opening decreases the neuron ability to generate a new action potential, thereby reducing nerve transmission. GABAARs containing alpha-1 and beta-2 or -3 subunits exhibit synaptogenic activity; the gamma-2 subunit being necessary but not sufficient to induce rapid synaptic contacts formation. Extrasynaptic beta-2 receptors contribute to the tonic GABAergic inhibition. Beta-containing GABAARs can simultaneously bind GABA and histamine where histamine binds at the interface of two neighboring beta subunits, which may be involved in the regulation of sleep and wakefulness. The chain is Gamma-aminobutyric acid receptor subunit beta-2 from Mus musculus (Mouse).